A 375-amino-acid chain; its full sequence is tRNA-specific 2-thiouridylase MnmA (375 aa).

Residues 12–19 (GMSGGVDS) and M38 each bind ATP. The tract at residues 98-100 (NPD) is interaction with target base in tRNA. C103 acts as the Nucleophile in catalysis. C103 and C200 form a disulfide bridge. G127 is an ATP binding site. Residues 150-152 (KDQ) are interaction with tRNA. C200 serves as the catalytic Cysteine persulfide intermediate. Residues 312 to 313 (RY) form an interaction with tRNA region.

The protein belongs to the MnmA/TRMU family.

The protein resides in the cytoplasm. The catalysed reaction is S-sulfanyl-L-cysteinyl-[protein] + uridine(34) in tRNA + AH2 + ATP = 2-thiouridine(34) in tRNA + L-cysteinyl-[protein] + A + AMP + diphosphate + H(+). In terms of biological role, catalyzes the 2-thiolation of uridine at the wobble position (U34) of tRNA, leading to the formation of s(2)U34. This Lactobacillus delbrueckii subsp. bulgaricus (strain ATCC BAA-365 / Lb-18) protein is tRNA-specific 2-thiouridylase MnmA.